We begin with the raw amino-acid sequence, 740 residues long: NAD(P)H-quinone oxidoreductase subunit 5, chloroplastic (740 aa).

16 consecutive transmembrane segments (helical) span residues 9–29, 40–60, 89–109, 125–145, 147–167, 185–205, 221–241, 258–278, 283–303, 327–347, 354–374, 396–416, 425–445, 547–567, 606–626, and 718–738; these read WIIPFIPLPVPILLGGGLLLF, WSFLSIFLLSIVMIFSLYLSI, IDPLTCIMLILITTVGILVLI, FAYMGFFNTSMLGLVTSSNLI, IYFFWELVGMCSYLLIGFWFT, GDFGLLLGILGLYWVTGSFEF, VNLLFLTLCAFLLFMGPIAKS, TPISALIHAATMVAAGIFLVA, LFIVIPSIMYIISLIGIITIL, LGYMMLALGMGSYRSALFHLI, ALLFLGSGSIIHSMEAIVGYS, TAFLLGTLSLCGIPPLACFWS, LLFSPIFAIIACSTAGLTAFY, ILFPMLVLLLFTLFIGAIGIP, FSVSIAFFGIFIAYCLYKPFY, and ISSYLFLYLSYVFLFFLFLKI.

It belongs to the complex I subunit 5 family. In terms of assembly, NDH is composed of at least 16 different subunits, 5 of which are encoded in the nucleus.

The protein resides in the plastid. It is found in the chloroplast thylakoid membrane. The enzyme catalyses a plastoquinone + NADH + (n+1) H(+)(in) = a plastoquinol + NAD(+) + n H(+)(out). It carries out the reaction a plastoquinone + NADPH + (n+1) H(+)(in) = a plastoquinol + NADP(+) + n H(+)(out). In terms of biological role, NDH shuttles electrons from NAD(P)H:plastoquinone, via FMN and iron-sulfur (Fe-S) centers, to quinones in the photosynthetic chain and possibly in a chloroplast respiratory chain. The immediate electron acceptor for the enzyme in this species is believed to be plastoquinone. Couples the redox reaction to proton translocation, and thus conserves the redox energy in a proton gradient. The polypeptide is NAD(P)H-quinone oxidoreductase subunit 5, chloroplastic (ndhF) (Aethionema cordifolium (Lebanon stonecress)).